The primary structure comprises 352 residues: V-type ATP synthase subunit C (352 aa).

The protein belongs to the V-ATPase V0D/AC39 subunit family.

In terms of biological role, produces ATP from ADP in the presence of a proton gradient across the membrane. This is V-type ATP synthase subunit C (atpC) from Deinococcus radiodurans (strain ATCC 13939 / DSM 20539 / JCM 16871 / CCUG 27074 / LMG 4051 / NBRC 15346 / NCIMB 9279 / VKM B-1422 / R1).